Reading from the N-terminus, the 498-residue chain is MSFVVTIPEALAAVATDLAGIGSTIGTANAAAAVPTTTVLAAAADEVSAAMAALFSGHAQAYQALSAQAALFHEQFVRALTAGAGSYAAAEAASAAPLEGVLDVINAPALALLGRPLIGNGANGAPGTGANGGDGGILIGNGGAGGSGAAGMPGGNGGAAGLFGNGGAGGAGGNVASGTAGFGGAGGAGGLLYGAGGAGGAGGRAGGGVGGIGGAGGAGGNGGLLFGAGGAGGVGGLAADAGDGGAGGDGGLFFGVGGAGGAGGTGTNVTGGAGGAGGNGGLLFGAGGVGGVGGDGVAFLGTAPGGPGGAGGAGGLFGVGGAGGAGGIGLVGNGGAGGSGGSALLWGDGGAGGAGGVGSTTGGAGGAGGNAGLLVGAGGAGGAGALGGGATGVGGAGGNGGTAGLLFGAGGAGGFGFGGAGGAGGLGGKAGLIGDGGDGGAGGNGTGAKGGDGGAGGGAILVGNGGNGGNAGSGTPNGSAGTGGAGGLLGKNGMNGLP.

The tract at residues 1–30 is essential for translocation to the cell surface; the sequence is MSFVVTIPEALAAVATDLAGIGSTIGTANA. The region spanning 1–93 is the PE domain; that stretch reads MSFVVTIPEA…AGSYAAAEAA (93 aa). Residues 140–260 are interacts with TLR2; it reads GNGGAGGSGA…GLFFGVGGAG (121 aa).

It belongs to the mycobacterial PE family. PGRS subfamily. As to quaternary structure, interacts with human TLR2.

It localises to the secreted. The protein localises to the cell wall. It is found in the cell surface. The protein resides in the cell outer membrane. Its activity is regulated as follows. Binding of Ca(2+) to PE_PGRS33 induces conformational changes and increases affinity for TLR2. Functionally, induces TNF-alpha release through human Toll-like receptor 2 (TLR2) signaling pathway, leading to macrophage apoptosis. The signaling pathway involves TLR2-dependent activation of the mitogen-activated protein kinase kinase kinase 5 (ASK1), which activates the p38 and JNK MAPKs, leading to enhanced expression of TNF-alpha and tumor necrosis factor receptor superfamily member 1A (TNFRI) genes. Signals are amplified through classical caspase 8-dependent mitochondrial release of cytochrome c, leading to the activation of caspases 9 and 3. Mediates Ca(2+)-dependent up-regulation of the anti-inflammatory cytokine IL-10. Mediates entry into macrophages in a TLR2-dependent mechanism and activates the TLR2-dependent pro-adhesive pathway. In Mycobacterium tuberculosis (strain ATCC 25618 / H37Rv), this protein is PE-PGRS family protein PE_PGRS33.